A 313-amino-acid chain; its full sequence is Methionyl-tRNA formyltransferase (313 aa).

113 to 116 (SLLP) contributes to the (6S)-5,6,7,8-tetrahydrofolate binding site.

It belongs to the Fmt family.

It catalyses the reaction L-methionyl-tRNA(fMet) + (6R)-10-formyltetrahydrofolate = N-formyl-L-methionyl-tRNA(fMet) + (6S)-5,6,7,8-tetrahydrofolate + H(+). Functionally, attaches a formyl group to the free amino group of methionyl-tRNA(fMet). The formyl group appears to play a dual role in the initiator identity of N-formylmethionyl-tRNA by promoting its recognition by IF2 and preventing the misappropriation of this tRNA by the elongation apparatus. This chain is Methionyl-tRNA formyltransferase, found in Acidithiobacillus ferrooxidans (strain ATCC 23270 / DSM 14882 / CIP 104768 / NCIMB 8455) (Ferrobacillus ferrooxidans (strain ATCC 23270)).